A 302-amino-acid polypeptide reads, in one-letter code: Glycine--tRNA ligase alpha subunit (302 aa).

It belongs to the class-II aminoacyl-tRNA synthetase family. As to quaternary structure, tetramer of two alpha and two beta subunits.

It localises to the cytoplasm. It carries out the reaction tRNA(Gly) + glycine + ATP = glycyl-tRNA(Gly) + AMP + diphosphate. The chain is Glycine--tRNA ligase alpha subunit from Xanthomonas oryzae pv. oryzae (strain PXO99A).